A 442-amino-acid chain; its full sequence is 2-oxoisovalerate dehydrogenase subunit alpha, mitochondrial (442 aa).

Residues 1–42 (MSAAKIWRPSRGLRQAALLLLGRSGVRGLARSHPSRQQQQQF) constitute a mitochondrion transit peptide. The tract at residues 30-50 (ARSHPSRQQQQQFPSLDDKPQ) is disordered. Y155 and R156 together coordinate thiamine diphosphate. Position 203 (S203) interacts with K(+). S204 is a binding site for thiamine diphosphate. Positions 205, 208, and 209 each coordinate K(+). E235 lines the Mg(2+) pocket. Thiamine diphosphate is bound by residues G236, A237, and R262. N264 and Y266 together coordinate Mg(2+). H333 provides a ligand contact to thiamine diphosphate. Residue S334 is modified to Phosphoserine; by BCKDK. The residue at position 335 (T335) is a Phosphothreonine. Residues S336 and S344 each carry the phosphoserine modification. N6-acetyllysine; alternate is present on K353. Residue K353 is modified to N6-succinyllysine; alternate. The residue at position 377 (K377) is an N6-succinyllysine.

Belongs to the BCKDHA family. Heterotetramer of 2 alpha/BCKDHA and 2 beta chains/BCKDHB that forms the branched-chain alpha-keto acid decarboxylase (E1) component of the BCKD complex. The branched-chain alpha-ketoacid dehydrogenase is a large complex composed of three major building blocks E1, E2 and E3. It is organized around E2, a 24-meric cubic core composed of DBT, to which are associated 6 to 12 copies of E1, and approximately 6 copies of the dehydrogenase E3, a DLD dimer. Interacts with PPM1K. Thiamine diphosphate serves as cofactor. The cofactor is Mg(2+). Phosphorylated at Ser-334 by BCKDK and dephosphorylated by protein phosphatase PPM1K.

The protein localises to the mitochondrion matrix. It carries out the reaction N(6)-[(R)-lipoyl]-L-lysyl-[protein] + 3-methyl-2-oxobutanoate + H(+) = N(6)-[(R)-S(8)-2-methylpropanoyldihydrolipoyl]-L-lysyl-[protein] + CO2. Its function is as follows. Together with BCKDHB forms the heterotetrameric E1 subunit of the mitochondrial branched-chain alpha-ketoacid dehydrogenase (BCKD) complex. The BCKD complex catalyzes the multi-step oxidative decarboxylation of alpha-ketoacids derived from the branched-chain amino-acids valine, leucine and isoleucine producing CO2 and acyl-CoA which is subsequently utilized to produce energy. The E1 subunit catalyzes the first step with the decarboxylation of the alpha-ketoacid forming an enzyme-product intermediate. A reductive acylation mediated by the lipoylamide cofactor of E2 extracts the acyl group from the E1 active site for the next step of the reaction. The polypeptide is 2-oxoisovalerate dehydrogenase subunit alpha, mitochondrial (Mus musculus (Mouse)).